A 282-amino-acid polypeptide reads, in one-letter code: MTDTPVTLSGSECNGDRPPENGQQPSSQTRKTTDADETQTYYGVEPSLQHLPAKENQEESGNSKGNVLPRGSEDEKILNENTEENLFVVHQAIQDLSLQETSAEDTVFQEGHPWKKIPLNSHNLDMSRQKERIVHQHLEQREDESAAHQATEIEWLGFQKSSQVDILHSKCDEEEEVWNEEINEEDVDECAEDEGEDEVRVIEFKRKYREGSPLKEESLAREDSPLSSPSSQPGTPDEQLVLGKKGDIARNSYSRYNTISYRKIRKGNTKQRIDEFESMMHL.

Composition is skewed to polar residues over residues 1–12 (MTDTPVTLSGSE) and 21–30 (NGQQPSSQTR). A disordered region spans residues 1 to 71 (MTDTPVTLSG…NSKGNVLPRG (71 aa)). 5 positions are modified to phosphoserine: S72, S212, S224, S228, and S231. The span at 212 to 224 (SPLKEESLAREDS) shows a compositional bias: basic and acidic residues. The interval 212-246 (SPLKEESLAREDSPLSSPSSQPGTPDEQLVLGKKG) is disordered. The span at 225–234 (PLSSPSSQPG) shows a compositional bias: polar residues. Residue T235 is modified to Phosphothreonine. A binds actin region spans residues 263 to 282 (KIRKGNTKQRIDEFESMMHL).

Binds actin. As to expression, expressed specifically by the oligodendrocytes. Highest expression seen in the spinal cord followed by brainstem, cerebellum, thalamus, and hypothalamus. In the myelin sheath, found mainly in the abaxon and the lateral few terminal loops. Its apposition to the myelinated axon, through the latter, defines an axonal subregion, termed juxtanode, at the Ranvier node-paranode junction.

The protein localises to the cytoplasm. It localises to the cytoskeleton. In terms of biological role, plays a role in cytoskeletal rearrangements during the late wrapping and/or compaction phases of myelinogenesis as well as in maintenance and stability of myelin sheath in the adult. May play an important role in late-stage oligodendroglia maturation, myelin/Ranvier node formation during CNS development, and in the maintenance and plasticity of related structures in the mature CNS. This is Ermin (Ermn) from Rattus norvegicus (Rat).